Here is a 130-residue protein sequence, read N- to C-terminus: Small ribosomal subunit protein uS8 (130 aa).

Belongs to the universal ribosomal protein uS8 family. Part of the 30S ribosomal subunit. Contacts proteins S5 and S12.

Functionally, one of the primary rRNA binding proteins, it binds directly to 16S rRNA central domain where it helps coordinate assembly of the platform of the 30S subunit. The sequence is that of Small ribosomal subunit protein uS8 from Pectobacterium carotovorum subsp. carotovorum (strain PC1).